We begin with the raw amino-acid sequence, 283 residues long: Shikimate dehydrogenase (NADP(+)) (283 aa).

Shikimate contacts are provided by residues 19–21 (SLS) and T66. The active-site Proton acceptor is K70. Shikimate-binding residues include N91 and D106. NADP(+) is bound by residues 129–133 (GAGGA), 153–158 (NRTPEK), and L224. Residue Y226 coordinates shikimate. G247 is a binding site for NADP(+).

The protein belongs to the shikimate dehydrogenase family. Homodimer.

It carries out the reaction shikimate + NADP(+) = 3-dehydroshikimate + NADPH + H(+). It functions in the pathway metabolic intermediate biosynthesis; chorismate biosynthesis; chorismate from D-erythrose 4-phosphate and phosphoenolpyruvate: step 4/7. Functionally, involved in the biosynthesis of the chorismate, which leads to the biosynthesis of aromatic amino acids. Catalyzes the reversible NADPH linked reduction of 3-dehydroshikimate (DHSA) to yield shikimate (SA). The protein is Shikimate dehydrogenase (NADP(+)) of Methanothermobacter thermautotrophicus (strain ATCC 29096 / DSM 1053 / JCM 10044 / NBRC 100330 / Delta H) (Methanobacterium thermoautotrophicum).